A 497-amino-acid chain; its full sequence is Guanosine-5'-triphosphate,3'-diphosphate pyrophosphatase (497 aa).

Belongs to the GppA/Ppx family. GppA subfamily.

The enzyme catalyses guanosine 3'-diphosphate 5'-triphosphate + H2O = guanosine 3',5'-bis(diphosphate) + phosphate + H(+). It functions in the pathway purine metabolism; ppGpp biosynthesis; ppGpp from GTP: step 2/2. Functionally, catalyzes the conversion of pppGpp to ppGpp. Guanosine pentaphosphate (pppGpp) is a cytoplasmic signaling molecule which together with ppGpp controls the 'stringent response', an adaptive process that allows bacteria to respond to amino acid starvation, resulting in the coordinated regulation of numerous cellular activities. The sequence is that of Guanosine-5'-triphosphate,3'-diphosphate pyrophosphatase from Vibrio campbellii (strain ATCC BAA-1116).